Reading from the N-terminus, the 84-residue chain is Large ribosomal subunit protein bL28 (84 aa).

Belongs to the bacterial ribosomal protein bL28 family.

This Clostridium perfringens (strain 13 / Type A) protein is Large ribosomal subunit protein bL28.